The chain runs to 293 residues: 4-hydroxy-tetrahydrodipicolinate synthase (293 aa).

T45 provides a ligand contact to pyruvate. Catalysis depends on Y133, which acts as the Proton donor/acceptor. K161 functions as the Schiff-base intermediate with substrate in the catalytic mechanism. Pyruvate is bound at residue I203.

It belongs to the DapA family. Homotetramer; dimer of dimers.

It localises to the cytoplasm. The catalysed reaction is L-aspartate 4-semialdehyde + pyruvate = (2S,4S)-4-hydroxy-2,3,4,5-tetrahydrodipicolinate + H2O + H(+). The protein operates within amino-acid biosynthesis; L-lysine biosynthesis via DAP pathway; (S)-tetrahydrodipicolinate from L-aspartate: step 3/4. In terms of biological role, catalyzes the condensation of (S)-aspartate-beta-semialdehyde [(S)-ASA] and pyruvate to 4-hydroxy-tetrahydrodipicolinate (HTPA). The chain is 4-hydroxy-tetrahydrodipicolinate synthase from Aliivibrio salmonicida (strain LFI1238) (Vibrio salmonicida (strain LFI1238)).